Here is a 254-residue protein sequence, read N- to C-terminus: Ribosomal RNA small subunit methyltransferase G (254 aa).

Positions 1–21 are disordered; that stretch reads MPEGDGVPRETPSPSVVPESP. Residues 9-21 show a composition bias toward low complexity; that stretch reads RETPSPSVVPESP. Residues Gly90, Leu95, 142–143, and Arg157 each bind S-adenosyl-L-methionine; that span reads AE. The disordered stretch occupies residues 230–254; the sequence is GPLRAATAPAPPGAAKRRPGKGNRR. Over residues 244-254 the composition is skewed to basic residues; it reads AKRRPGKGNRR.

This sequence belongs to the methyltransferase superfamily. RNA methyltransferase RsmG family.

The protein localises to the cytoplasm. Its function is as follows. Specifically methylates the N7 position of guanine in position 518 of 16S rRNA. The sequence is that of Ribosomal RNA small subunit methyltransferase G from Kineococcus radiotolerans (strain ATCC BAA-149 / DSM 14245 / SRS30216).